The sequence spans 798 residues: General transcription and DNA repair factor IIH helicase/translocase subunit XPB (798 aa).

Disordered regions lie at residues 1–62 and 235–254; these read MGPP…EQIN and PPGA…GADG. The Nuclear localization signal signature appears at 6–22; sequence KSRKDRSGGDKFGKKRR. Residues 10-25 are compositionally biased toward basic and acidic residues; sequence DRSGGDKFGKKRRAED. Residues 33-42 are compositionally biased toward acidic residues; the sequence is DDNDSLDATE. Residues 343–504 enclose the Helicase ATP-binding domain; it reads MFGNGRARSG…DLNFLIGPKL (162 aa). 360 to 367 provides a ligand contact to ATP; the sequence is AGKSLVGV. Positions 457-460 match the DEVH box motif; sequence DEVH. Residues 558–713 enclose the Helicase C-terminal domain; it reads RSCQFLIKYH…KVITHLKGMD (156 aa). The disordered stretch occupies residues 746–765; that stretch reads LPGEPGYRPSGSGGAVRRVG.

It belongs to the helicase family. RAD25/XPB subfamily. As to quaternary structure, component of the 7-subunit TFIIH core complex composed of haywire/XPB/ERCC3, XPD/ERCC2, GTF2H1, GTF2H2, GTF2H3, GTF2H4 and GTF2H5, which is active in NER. The core complex associates with the 3-subunit CDK-activating kinase (CAK) module composed of CCNH/cyclin H, CDK7 and MNAT1 to form the 10-subunit holoenzyme (holo-TFIIH) active in transcription. Interacts with PUF60. Interacts with ATF7IP. Interacts with Epstein-Barr virus EBNA2.

Its subcellular location is the nucleus. It carries out the reaction Couples ATP hydrolysis with the unwinding of duplex DNA by translocating in the 3'-5' direction.. It catalyses the reaction ATP + H2O = ADP + phosphate + H(+). ATP-dependent 3'-5' DNA helicase/translocase; binds dsDNA rather than ssDNA, unzipping it in a translocase rather than classical helicase activity. Component of the general transcription and DNA repair factor IIH (TFIIH) core complex. When complexed to CDK-activating kinase (CAK), involved in RNA transcription by RNA polymerase II. The ATPase activity of XPB/ERCC3, but not its helicase activity, is required for DNA opening; it may wrap around the damaged DNA wedging it open, causing localized melting and twisting that allows XPD/ERCC2 helicase to anchor. The ATP-dependent helicase activity of XPB/ERCC3 may be required for promoter escape. Also involved in transcription-coupled nucleotide excision repair (NER) of damaged DNA. In NER, TFIIH acts by opening DNA around the lesion to allow the excision of the damaged oligonucleotide and its replacement by a new DNA fragment. The structure of the TFIIH transcription complex differs from the NER-TFIIH complex; large movements by XPD/ERCC2 and XPB/ERCC3 are stabilized by XPA. This chain is General transcription and DNA repair factor IIH helicase/translocase subunit XPB (hay), found in Drosophila melanogaster (Fruit fly).